We begin with the raw amino-acid sequence, 925 residues long: Translation initiation factor IF-2 (925 aa).

The disordered stretch occupies residues 190–329 (PAAPTSEAAP…RRRDEREAAV (140 aa)). 3 stretches are compositionally biased toward pro residues: residues 199 to 209 (PPEPEPTPLPA), 217 to 238 (PVRP…PAPR), and 279 to 288 (RPVPAQPAPQ). A compositionally biased stretch (low complexity) spans 289 to 307 (TPTRSGSGIAKKGAITKAG). The segment covering 320–329 (RRRDEREAAV) has biased composition (basic and acidic residues). A tr-type G domain is found at 417 to 589 (VRPPVVTIMG…LLLVADYELE (173 aa)). The interval 426–433 (GHVDHGKT) is G1. 426-433 (GHVDHGKT) serves as a coordination point for GTP. The tract at residues 451 to 455 (GITQH) is G2. Positions 476–479 (DTPG) are G3. GTP-binding positions include 476-480 (DTPGH) and 530-533 (NKVD). A G4 region spans residues 530–533 (NKVD). The tract at residues 566–568 (SAK) is G5.

This sequence belongs to the TRAFAC class translation factor GTPase superfamily. Classic translation factor GTPase family. IF-2 subfamily.

Its subcellular location is the cytoplasm. Its function is as follows. One of the essential components for the initiation of protein synthesis. Protects formylmethionyl-tRNA from spontaneous hydrolysis and promotes its binding to the 30S ribosomal subunits. Also involved in the hydrolysis of GTP during the formation of the 70S ribosomal complex. In Gloeobacter violaceus (strain ATCC 29082 / PCC 7421), this protein is Translation initiation factor IF-2.